A 99-amino-acid polypeptide reads, in one-letter code: Small ribosomal subunit protein uS14 (99 aa).

Belongs to the universal ribosomal protein uS14 family. As to quaternary structure, part of the 30S ribosomal subunit. Contacts proteins S3 and S10.

In terms of biological role, binds 16S rRNA, required for the assembly of 30S particles and may also be responsible for determining the conformation of the 16S rRNA at the A site. In Bacteroides fragilis (strain ATCC 25285 / DSM 2151 / CCUG 4856 / JCM 11019 / LMG 10263 / NCTC 9343 / Onslow / VPI 2553 / EN-2), this protein is Small ribosomal subunit protein uS14.